We begin with the raw amino-acid sequence, 1379 residues long: DNA-directed RNA polymerase subunit beta (1379 aa).

Belongs to the RNA polymerase beta chain family. In terms of assembly, the RNAP catalytic core consists of 2 alpha, 1 beta, 1 beta' and 1 omega subunit. When a sigma factor is associated with the core the holoenzyme is formed, which can initiate transcription.

The catalysed reaction is RNA(n) + a ribonucleoside 5'-triphosphate = RNA(n+1) + diphosphate. Its function is as follows. DNA-dependent RNA polymerase catalyzes the transcription of DNA into RNA using the four ribonucleoside triphosphates as substrates. The protein is DNA-directed RNA polymerase subunit beta of Chelativorans sp. (strain BNC1).